We begin with the raw amino-acid sequence, 495 residues long: Bifunctional protein GlmU (495 aa).

The pyrophosphorylase stretch occupies residues 1 to 241 (MTFPGDTAVL…SALVAGVNNR (241 aa)). UDP-N-acetyl-alpha-D-glucosamine contacts are provided by residues 12 to 15 (LAAG), K26, Q83, 88 to 89 (GT), 112 to 114 (SGD), G151, E166, N181, and N239. D114 lines the Mg(2+) pocket. N239 contributes to the Mg(2+) binding site. A linker region spans residues 242-262 (VQLAELASELNRRVVAAHQLA). Residues 263–495 (GVTVVDPATT…TQPPDADQTP (233 aa)) are N-acetyltransferase. Residues R344 and K362 each coordinate UDP-N-acetyl-alpha-D-glucosamine. H374 (proton acceptor) is an active-site residue. 2 residues coordinate UDP-N-acetyl-alpha-D-glucosamine: Y377 and N388. Residues A391, 397–398 (NY), S416, and A434 each bind acetyl-CoA. A disordered region spans residues 457–495 (IENWVQRKRPGSPAAQASKRASEMACQQPTQPPDADQTP). Over residues 483 to 495 (QQPTQPPDADQTP) the composition is skewed to low complexity.

The protein in the N-terminal section; belongs to the N-acetylglucosamine-1-phosphate uridyltransferase family. This sequence in the C-terminal section; belongs to the transferase hexapeptide repeat family. Homotrimer. It depends on Mg(2+) as a cofactor.

The protein localises to the cytoplasm. It catalyses the reaction alpha-D-glucosamine 1-phosphate + acetyl-CoA = N-acetyl-alpha-D-glucosamine 1-phosphate + CoA + H(+). It carries out the reaction N-acetyl-alpha-D-glucosamine 1-phosphate + UTP + H(+) = UDP-N-acetyl-alpha-D-glucosamine + diphosphate. It functions in the pathway nucleotide-sugar biosynthesis; UDP-N-acetyl-alpha-D-glucosamine biosynthesis; N-acetyl-alpha-D-glucosamine 1-phosphate from alpha-D-glucosamine 6-phosphate (route II): step 2/2. It participates in nucleotide-sugar biosynthesis; UDP-N-acetyl-alpha-D-glucosamine biosynthesis; UDP-N-acetyl-alpha-D-glucosamine from N-acetyl-alpha-D-glucosamine 1-phosphate: step 1/1. The protein operates within bacterial outer membrane biogenesis; LPS lipid A biosynthesis. In terms of biological role, catalyzes the last two sequential reactions in the de novo biosynthetic pathway for UDP-N-acetylglucosamine (UDP-GlcNAc). The C-terminal domain catalyzes the transfer of acetyl group from acetyl coenzyme A to glucosamine-1-phosphate (GlcN-1-P) to produce N-acetylglucosamine-1-phosphate (GlcNAc-1-P), which is converted into UDP-GlcNAc by the transfer of uridine 5-monophosphate (from uridine 5-triphosphate), a reaction catalyzed by the N-terminal domain. This chain is Bifunctional protein GlmU, found in Mycobacterium tuberculosis (strain ATCC 25177 / H37Ra).